Reading from the N-terminus, the 435-residue chain is Tol-Pal system protein TolB (435 aa).

Positions 1 to 26 (MKTFSLLRILIVLVGMAGAFATPAMA) are cleaved as a signal peptide.

Belongs to the TolB family. As to quaternary structure, the Tol-Pal system is composed of five core proteins: the inner membrane proteins TolA, TolQ and TolR, the periplasmic protein TolB and the outer membrane protein Pal. They form a network linking the inner and outer membranes and the peptidoglycan layer.

It localises to the periplasm. In terms of biological role, part of the Tol-Pal system, which plays a role in outer membrane invagination during cell division and is important for maintaining outer membrane integrity. This Allorhizobium ampelinum (strain ATCC BAA-846 / DSM 112012 / S4) (Agrobacterium vitis (strain S4)) protein is Tol-Pal system protein TolB.